The sequence spans 754 residues: Bifunctional sesterterpene synthase astC (754 aa).

The first 24 residues, 1-24 (MASLEVFVLYLRIFFISFMSRARS), serve as a signal peptide directing secretion. Positions 58 to 388 (IQYRHSKLVD…RYHFHKPEHW (331 aa)) are sesterterpene synthase. 2 residues coordinate Mg(2+): aspartate 149 and aspartate 153. Residues 389–753 (RQVENVDDDG…LRLLLKRLHV (365 aa)) are geranylfarnesyl diphosphate synthase. Residues 392 to 403 (ENVDDDGNKSDD) are compositionally biased toward basic and acidic residues. The segment at 392-414 (ENVDDDGNKSDDSGIAMKDSPES) is disordered. The Mg(2+) site is built by aspartate 512 and aspartate 516.

It in the N-terminal section; belongs to the terpene synthase family. The protein in the C-terminal section; belongs to the FPP/GGPP synthase family. Requires Mg(2+) as cofactor.

The enzyme catalyses (2E,6E,10E,14E)-geranylfarnesyl diphosphate = preasperterpenoid A + diphosphate. It functions in the pathway secondary metabolite biosynthesis; terpenoid biosynthesis. In terms of biological role, bifunctional sesterterpene synthase; part of the gene cluster that mediates the biosynthesis of the asperterpenoids, sesterterpenes that exhibit anti-tuberculosis activity. The first step of the pathway is performed by the sesterterpene synthase astC that possesses both prenyl transferase and terpene cyclase activity, converting isopentenyl diphosphate and dimethylallyl diphosphate into geranylfarnesyl diphosphate (GFPP) and further converting GFPP into preasperterpenoid A, respectively. The cytochrome P450 monooxygenase astB then dually oxidizes preasperterpenoid A to produce asperterpenoid A along with a minor product, asperterpenoid B. Finally, the cytochrome P450 monooxygenase astA converts asperterpenoid A into asperterpenoid C. The protein is Bifunctional sesterterpene synthase astC of Talaromyces wortmannii (Penicillium wortmannii).